The sequence spans 356 residues: UDP-N-acetylglucosamine--N-acetylmuramyl-(pentapeptide) pyrophosphoryl-undecaprenol N-acetylglucosamine transferase (356 aa).

Serine 195 and glutamine 287 together coordinate UDP-N-acetyl-alpha-D-glucosamine.

Belongs to the glycosyltransferase 28 family. MurG subfamily.

It is found in the cell membrane. It catalyses the reaction Mur2Ac(oyl-L-Ala-gamma-D-Glu-L-Lys-D-Ala-D-Ala)-di-trans,octa-cis-undecaprenyl diphosphate + UDP-N-acetyl-alpha-D-glucosamine = beta-D-GlcNAc-(1-&gt;4)-Mur2Ac(oyl-L-Ala-gamma-D-Glu-L-Lys-D-Ala-D-Ala)-di-trans,octa-cis-undecaprenyl diphosphate + UDP + H(+). It functions in the pathway cell wall biogenesis; peptidoglycan biosynthesis. In terms of biological role, cell wall formation. Catalyzes the transfer of a GlcNAc subunit on undecaprenyl-pyrophosphoryl-MurNAc-pentapeptide (lipid intermediate I) to form undecaprenyl-pyrophosphoryl-MurNAc-(pentapeptide)GlcNAc (lipid intermediate II). The sequence is that of UDP-N-acetylglucosamine--N-acetylmuramyl-(pentapeptide) pyrophosphoryl-undecaprenol N-acetylglucosamine transferase from Streptococcus sanguinis (strain SK36).